Reading from the N-terminus, the 334-residue chain is Malate dehydrogenase (334 aa).

17–23 (GAAGQIG) provides a ligand contact to NAD(+). 2 residues coordinate substrate: Arg98 and Arg104. Residues Asn111, Gln118, and 135 to 137 (VGN) each bind NAD(+). Residues Asn137 and Arg168 each coordinate substrate. His193 serves as the catalytic Proton acceptor.

The protein belongs to the LDH/MDH superfamily. MDH type 2 family.

It carries out the reaction (S)-malate + NAD(+) = oxaloacetate + NADH + H(+). Its function is as follows. Catalyzes the reversible oxidation of malate to oxaloacetate. The protein is Malate dehydrogenase of Deinococcus geothermalis (strain DSM 11300 / CIP 105573 / AG-3a).